A 149-amino-acid chain; its full sequence is Transcriptional repressor NrdR (149 aa).

A zinc finger lies at cysteine 3–cysteine 34. Residues proline 49–glutamate 139 enclose the ATP-cone domain.

It belongs to the NrdR family. The cofactor is Zn(2+).

In terms of biological role, negatively regulates transcription of bacterial ribonucleotide reductase nrd genes and operons by binding to NrdR-boxes. This is Transcriptional repressor NrdR from Shewanella woodyi (strain ATCC 51908 / MS32).